The following is a 360-amino-acid chain: Peptide chain release factor 1 (360 aa).

The residue at position 236 (Gln-236) is an N5-methylglutamine.

Belongs to the prokaryotic/mitochondrial release factor family. Methylated by PrmC. Methylation increases the termination efficiency of RF1.

The protein localises to the cytoplasm. In terms of biological role, peptide chain release factor 1 directs the termination of translation in response to the peptide chain termination codons UAG and UAA. This is Peptide chain release factor 1 from Lactiplantibacillus plantarum (strain ATCC BAA-793 / NCIMB 8826 / WCFS1) (Lactobacillus plantarum).